Reading from the N-terminus, the 66-residue chain is Truncated interferon antagonist OPG039 (66 aa).

The ANK repeat unit spans residues 29-58 (HGHSALYYAIADNNMRLVCTLLNAGALKNL).

This sequence belongs to the orthopoxvirus OPG039 family.

The polypeptide is Truncated interferon antagonist OPG039 (OPG040) (Homo sapiens (Human)).